The primary structure comprises 328 residues: Phosphatidate cytidylyltransferase (328 aa).

Polar residues predominate over residues 15-29 (SGRSATKSVTTNDAG). Positions 15–50 (SGRSATKSVTTNDAGTGNPAEQPARGAKQQPATETS) are disordered. 7 helical membrane-spanning segments follow: residues 58–78 (AAIV…VFVP), 103–123 (AGYL…VWLT), 124–144 (WPFG…VCMI), 173–193 (ATVF…MLVY), 202–222 (FCMM…GVLF), 239–259 (GFAG…TFLV), and 263–283 (PWIG…GDLV).

This sequence belongs to the CDS family.

It is found in the cell membrane. The catalysed reaction is a 1,2-diacyl-sn-glycero-3-phosphate + CTP + H(+) = a CDP-1,2-diacyl-sn-glycerol + diphosphate. It functions in the pathway phospholipid metabolism; CDP-diacylglycerol biosynthesis; CDP-diacylglycerol from sn-glycerol 3-phosphate: step 3/3. This chain is Phosphatidate cytidylyltransferase (cdsA), found in Mycobacterium tuberculosis (strain CDC 1551 / Oshkosh).